The following is a 338-amino-acid chain: Cytochrome c biogenesis protein CcsA (338 aa).

Transmembrane regions (helical) follow at residues 15-35, 36-56, 71-91, 97-117, 142-162, 246-266, 273-293, and 307-327; these read FLVL…PNIP, GLTG…ATLL, LYES…VAEW, WVGV…ALSL, VMMI…AFLI, IIGL…VWAN, WSWD…AAYL, and AFLA…VNIL.

The protein belongs to the CcmF/CycK/Ccl1/NrfE/CcsA family. In terms of assembly, may interact with ccs1.

It is found in the cellular thylakoid membrane. Functionally, required during biogenesis of c-type cytochromes (cytochrome c6 and cytochrome f) at the step of heme attachment. The chain is Cytochrome c biogenesis protein CcsA from Picosynechococcus sp. (strain ATCC 27264 / PCC 7002 / PR-6) (Agmenellum quadruplicatum).